The chain runs to 80 residues: RNA-binding protein Hfq (80 aa).

The region spanning 10-70 is the Sm domain; it reads DLFLNTVRKQ…ISTIMPGQPM (61 aa).

It belongs to the Hfq family. Homohexamer.

Functionally, RNA chaperone that binds small regulatory RNA (sRNAs) and mRNAs to facilitate mRNA translational regulation in response to envelope stress, environmental stress and changes in metabolite concentrations. Also binds with high specificity to tRNAs. This chain is RNA-binding protein Hfq, found in Agrobacterium fabrum (strain C58 / ATCC 33970) (Agrobacterium tumefaciens (strain C58)).